Here is a 391-residue protein sequence, read N- to C-terminus: Leucine-rich repeat-containing protein 74B (391 aa).

Residues 1-38 (MKGPCEVQKNEDQEGEAAATGPQAETLEAERSWTADSH) are disordered. Over residues 28–38 (EAERSWTADSH) the composition is skewed to basic and acidic residues. 9 LRR repeats span residues 106-126 (YIKR…EALA), 134-154 (IISD…QAIC), 162-182 (TVEK…QHLA), 190-211 (GLKS…ILGP), 218-239 (GLTE…AFAR), 246-259 (FLKV…GFGD), 274-294 (VLEE…LKLG), 302-323 (TLRI…GLLK), and 332-354 (ALEL…ASSM). Residues 371–391 (KDWPQASTPSQPASAPSDSGL) form a disordered region. Positions 374–391 (PQASTPSQPASAPSDSGL) are enriched in low complexity.

This Mus musculus (Mouse) protein is Leucine-rich repeat-containing protein 74B.